The sequence spans 80 residues: Serine palmitoyltransferase small subunit B (80 aa).

Topologically, residues 1-11 (MDMKNMREYMS) are cytoplasmic. The helical transmembrane segment at 12 to 29 (WLYYQYLLITGIYVLEPW) threads the bilayer. At 30 to 36 (EQSIFNT) the chain is on the lumenal side. A helical membrane pass occupies residues 37–57 (VLFTMVAMVIYTSYVFVPIHV). Residues 58–80 (RLALEFFCELVGGQPESTVALMT) lie on the Cytoplasmic side of the membrane.

The protein belongs to the SPTSS family. SPTSSB subfamily. As to quaternary structure, component of the serine palmitoyltransferase (SPT) complex, which is composed of SPTLC1, SPTLC2 or SPTLC3 and SPTSSA or SPTSSB. The heterodimer consisting of SPTLC1 and SPTLC2/SPTLC3 forms the catalytic core of the enzyme, while SPTSSA or SPTSSB subunits determine substrate specificity. SPT also interacts with ORMDL proteins, especially ORMDL3, which negatively regulate SPT activity in the presence of ceramides.

The protein resides in the endoplasmic reticulum membrane. It functions in the pathway lipid metabolism; sphingolipid metabolism. Component of the serine palmitoyltransferase multisubunit enzyme (SPT) that catalyzes the initial and rate-limiting step in sphingolipid biosynthesis by condensing L-serine and activated acyl-CoA (most commonly palmitoyl-CoA) to form long-chain bases. The SPT complex is composed of SPTLC1, SPTLC2 or SPTLC3 and SPTSSA or SPTSSB. Within this complex, the heterodimer consisting of SPTLC1 and SPTLC2/SPTLC3 forms the catalytic core. Within the SPT complex, SPTSSB stimulates the catalytic activity and plays a role in substrate specificity. SPT complexes with this subunit showing a preference for longer acyl-CoAs. The SPTLC1-SPTLC2-SPTSSB complex shows a strong preference for C18-CoA substrate, while the SPTLC1-SPTLC3-SPTSSB isozyme displays an ability to use a broader range of acyl-CoAs, without apparent preference. This Danio rerio (Zebrafish) protein is Serine palmitoyltransferase small subunit B (sptssb).